A 144-amino-acid polypeptide reads, in one-letter code: MSSHQQKQPCTVPPQLHQQQVKQPCQPPPQEPCAPKTKDPCHPVPEPCNPKGPEPCHPKAPEPCHPKAPEPCNPKVPEPCQPKVPEPCQPKVPEPCNPKVPEPCQPKAPEPCHPKAPEPCHPVVPEPCPSTVTPSPYQQKTKQK.

The tract at residues 1-41 (MSSHQQKQPCTVPPQLHQQQVKQPCQPPPQEPCAPKTKDPC) is disordered. The span at 13-24 (PPQLHQQQVKQP) shows a compositional bias: low complexity. Repeat copies occupy residues 27–34 (PPPQEPCA), 35–42 (PKTKDPCH), 43–49 (PVPEPCN), 50–57 (PKGPEPCH), 58–65 (PKAPEPCH), 66–73 (PKAPEPCN), 74–81 (PKVPEPCQ), 82–89 (PKVPEPCQ), 90–97 (PKVPEPCN), 98–105 (PKVPEPCQ), 106–113 (PKAPEPCH), 114–121 (PKAPEPCH), and 122–129 (PVVPEPCP). The segment at 27–129 (PPPQEPCAPK…CHPVVPEPCP (103 aa)) is 13 X 8 AA approximate tandem repeats.

It belongs to the cornifin (SPRR) family. As to expression, expressed in fetal periderm, hair follicles and in the thickened epidermis of the lip and footpad. Also present in the epithelia of various tissues such as the penis, vagina, forestomach, tongue and esophagus.

Its subcellular location is the cytoplasm. Cross-linked envelope protein of keratinocytes. It is a keratinocyte protein that first appears in the cell cytosol, but ultimately becomes cross-linked to membrane proteins by transglutaminase. All that results in the formation of an insoluble envelope beneath the plasma membrane. May participate widely in the construction of cell envelopes in cornifying epithelia characterized by either increased thickness or a requirement for extreme flexibility. In Mus musculus (Mouse), this protein is Cornifin-A (Sprr1a).